Consider the following 200-residue polypeptide: Inner membrane-spanning protein YciB (200 aa).

The next 6 helical transmembrane spans lie at 1–21, 37–57, 66–86, 103–123, 136–156, and 167–187; these read MPPL…FFAN, IGAP…IALA, LAIM…LTLW, LFGG…GYVF, KLTL…EIVW, and FKVW…MPLI.

Belongs to the YciB family.

Its subcellular location is the cell inner membrane. Plays a role in cell envelope biogenesis, maintenance of cell envelope integrity and membrane homeostasis. This chain is Inner membrane-spanning protein YciB, found in Brucella melitensis biotype 1 (strain ATCC 23456 / CCUG 17765 / NCTC 10094 / 16M).